Reading from the N-terminus, the 340-residue chain is Ketol-acid reductoisomerase (NADP(+)) (340 aa).

A KARI N-terminal Rossmann domain is found at 3-182 (VEMLYEADVK…GSARVGLLVT (180 aa)). NADP(+) is bound by residues 26-29 (YGSQ), arginine 49, serine 53, and 83-86 (DEIQ). Histidine 108 is an active-site residue. Glycine 134 contributes to the NADP(+) binding site. Residues 183-328 (TFKEETEEDL…AELRKAMPFV (146 aa)) enclose the KARI C-terminal knotted domain. The Mg(2+) site is built by aspartate 191, glutamate 195, glutamate 227, and glutamate 231. Substrate is bound at residue serine 252.

Belongs to the ketol-acid reductoisomerase family. Requires Mg(2+) as cofactor.

It catalyses the reaction (2R)-2,3-dihydroxy-3-methylbutanoate + NADP(+) = (2S)-2-acetolactate + NADPH + H(+). It carries out the reaction (2R,3R)-2,3-dihydroxy-3-methylpentanoate + NADP(+) = (S)-2-ethyl-2-hydroxy-3-oxobutanoate + NADPH + H(+). The protein operates within amino-acid biosynthesis; L-isoleucine biosynthesis; L-isoleucine from 2-oxobutanoate: step 2/4. Its pathway is amino-acid biosynthesis; L-valine biosynthesis; L-valine from pyruvate: step 2/4. Involved in the biosynthesis of branched-chain amino acids (BCAA). Catalyzes an alkyl-migration followed by a ketol-acid reduction of (S)-2-acetolactate (S2AL) to yield (R)-2,3-dihydroxy-isovalerate. In the isomerase reaction, S2AL is rearranged via a Mg-dependent methyl migration to produce 3-hydroxy-3-methyl-2-ketobutyrate (HMKB). In the reductase reaction, this 2-ketoacid undergoes a metal-dependent reduction by NADPH to yield (R)-2,3-dihydroxy-isovalerate. The protein is Ketol-acid reductoisomerase (NADP(+)) of Streptococcus mutans serotype c (strain ATCC 700610 / UA159).